A 321-amino-acid polypeptide reads, in one-letter code: NADPH-dependent codeinone reductase 1-2 (321 aa).

NADPH-binding residues include Thr-27 and Asp-51. Residues Tyr-56 and His-119 each act as proton donor in the active site. A substrate-binding site is contributed by His-119. The NADPH site is built by Ser-165, Gln-187, Ser-214, Leu-216, Ser-264, and Arg-269. Residues 299–321 (SADFLLSPTGPFKTEEEFWDEKD) form a disordered region.

The protein belongs to the aldo/keto reductase family. Latex secreting cells (laticifer cells). Expressed constitutively in all organs with highest levels in capsules. Restricted to the parietal region of sieve elements adjacent or proximal to laticifers in roots, stems, leaves and carpels.

It is found in the cytoplasm. The protein resides in the cytosol. It carries out the reaction codeine + NADP(+) = codeinone + NADPH + H(+). It catalyses the reaction neopine + NADP(+) = neopinone + NADPH + H(+). The catalysed reaction is morphine + NADP(+) = morphinone + NADPH + H(+). The enzyme catalyses neomorphine + NADP(+) = neomorphinone + NADPH + H(+). The protein operates within alkaloid biosynthesis; morphine biosynthesis. Functionally, NADPH-dependent codeinone reductase involved in biosynthesis of morphinan-type benzylisoquinoline and opiate alkaloids natural products. Reduces codeinone to codeine in the penultimate step in morphine biosynthesis. Can use morphinone, hydrocodone and hydromorphone as substrate during reductive reaction with NADPH as cofactor, and morphine and dihydrocodeine as substrate during oxidative reaction with NADP as cofactor. Converts morphinone to morphine, and neomorphinone to neomorphine. Reduces irreversibly neopinone, a spontaneous isomer of codeinone, to neopine; in planta, neopine levels are limited to low levels. This Papaver somniferum (Opium poppy) protein is NADPH-dependent codeinone reductase 1-2.